Here is a 296-residue protein sequence, read N- to C-terminus: Factor associated with metabolism and energy (296 aa).

Gly2 is lipidated: N-myristoyl glycine. 2 stretches are compositionally biased toward basic and acidic residues: residues 173-187 (SLHGEARINKQSPRD) and 267-281 (EQGKDEKKPRALVRT). 2 disordered regions span residues 173–204 (SLHGEARINKQSPRDHKAKKTLQSTPRNDDHD) and 256–281 (LLWDSSSSDSDEQGKDEKKPRALVRT).

The protein resides in the cell membrane. It is found in the cytoplasmic vesicle. In terms of biological role, may be involved in tuning the metabolism, energy expenditure, and excretion processes. The protein is Factor associated with metabolism and energy of Homo sapiens (Human).